A 427-amino-acid chain; its full sequence is Enolase (427 aa).

Gln163 contributes to the (2R)-2-phosphoglycerate binding site. The active-site Proton donor is Glu205. Asp242, Glu283, and Asp310 together coordinate Mg(2+). (2R)-2-phosphoglycerate-binding residues include Lys335, Arg364, Ser365, and Lys386. Lys335 acts as the Proton acceptor in catalysis.

It belongs to the enolase family. Requires Mg(2+) as cofactor.

It localises to the cytoplasm. Its subcellular location is the secreted. The protein resides in the cell surface. The catalysed reaction is (2R)-2-phosphoglycerate = phosphoenolpyruvate + H2O. The protein operates within carbohydrate degradation; glycolysis; pyruvate from D-glyceraldehyde 3-phosphate: step 4/5. Functionally, catalyzes the reversible conversion of 2-phosphoglycerate (2-PG) into phosphoenolpyruvate (PEP). It is essential for the degradation of carbohydrates via glycolysis. The polypeptide is Enolase (Salinispora arenicola (strain CNS-205)).